We begin with the raw amino-acid sequence, 495 residues long: MDSFPLLAALFFIAATITFLSFRRRRNLPPGPFPYPIVGNMLQLGANPHQVFAKLSKRYGPLMSIHLGSLYTVIVSSPEMAKEILHRHGQVFSGRTIAQAVHACDHDKISMGFLPVASEWRDMRKICKEQMFSNQSMEASQGLRRQKLQQLLDHVQKCSDSGRAVDIREAAFITTLNLMSATLFSSQATEFDSKATMEFKEIIEGVATIVGVPNFADYFPILRPFDPQGVKRRADVFFGKLLAKIEGYLNERLESKRANPNAPKKDDFLEIVVDIIQANEFKLKTHHFTHLMLDLFVGGSDTNTTSIEWAMSELVMNPDKMARLKAELKSVAGDEKIVDESAMPKLPYLQAVIKEVMRIHPPGPLLLPRKAESDQEVNGYLIPKGTQILINAYAIGRDPSIWTDPETFDPERFLDNKIDFKGQDYELLPFGSGRRVCPGMPLATRILHMATATLVHNFDWKLEDDSTAAADHAGELFGVAVRRAVPLRIIPIVKS.

A topological domain (lumenal) is located at residue methionine 1. A helical membrane pass occupies residues aspartate 2 to phenylalanine 22. Residues arginine 23–serine 495 lie on the Cytoplasmic side of the membrane. A heme-binding site is contributed by cysteine 437.

Belongs to the cytochrome P450 family. Heme serves as cofactor. Expression is more abundant in the rhizome.

Its subcellular location is the endoplasmic reticulum membrane. The catalysed reaction is abieta-8,11,13-triene + reduced [NADPH--hemoprotein reductase] + O2 = ferruginol + oxidized [NADPH--hemoprotein reductase] + H2O + H(+). In terms of biological role, cytochrome P450 enzyme (CYP) which catalyzes a unique two-electron oxidation cascade on abieta-8,11,13-triene to produce ferruginol, an intermediate in tanshinone biosynthesis. The sequence is that of Ferruginol synthase from Salvia miltiorrhiza (Chinese sage).